The primary structure comprises 465 residues: Hepatocyte nuclear factor 6 (465 aa).

2 disordered regions span residues 15–84 (GVSH…GPLH) and 119–141 (SDKFPHHHHHHHHHHHPHHHQRL). Residues 123-140 (PHHHHHHHHHHHPHHHQR) are compositionally biased toward basic residues. The segment at residues 283-369 (GSNSGQMEEI…QRMSALRLAA (87 aa)) is a DNA-binding region (CUT). The segment at residues 385–444 (PKKPRLVFTDVQRRTLHAIFKENKRPSKELQITISQQLGLELSTVSNFFMNARRRSLDKW) is a DNA-binding region (homeobox). Positions 443–465 (KWQDEGGSNSGSSSSSSSTCTKA) are disordered. Over residues 448–465 (GGSNSGSSSSSSSTCTKA) the composition is skewed to low complexity.

The protein belongs to the CUT homeobox family. As to quaternary structure, binds DNA as a monomer.

It localises to the nucleus. Its function is as follows. Transcriptional activator. Binds the consensus sequence 5'-DHWATTGAYTWWD-3' on a variety of gene promoters such as those of HNF3B and TTR. Important for liver genes transcription. Stimulates the expression of Onecut3 in the developing endoderm. In Mus musculus (Mouse), this protein is Hepatocyte nuclear factor 6 (Onecut1).